We begin with the raw amino-acid sequence, 1661 residues long: ATP-dependent bile acid permease (1661 aa).

At 1 to 33 (MHHVLNSTRPDHRFWFYDDVTQYGRTKYLNYYT) the chain is on the lumenal side. Asn-6 carries N-linked (GlcNAc...) asparagine glycosylation. The chain crosses the membrane as a helical span at residues 34–54 (PLVLLIFTVLFITYNIWKHYY). The Cytoplasmic portion of the chain corresponds to 55-74 (YYDVLHLKQKNPIDELLYSS). Residues 75-95 (TDEDEQSPLINNNTITTNYVD) form a helical membrane-spanning segment. The Lumenal portion of the chain corresponds to 96 to 133 (NNCTKDALKNRHFSLEKLKSVKVNGEPHGTPEIVRRGF). Residue Asn-97 is glycosylated (N-linked (GlcNAc...) asparagine). Residues 134 to 154 (IEKSRIILEFFLVLSQVIIHS) traverse the membrane as a helical segment. The Cytoplasmic segment spans residues 155–166 (FILLHYVNKNPE). A helical membrane pass occupies residues 167 to 187 (FTQQGTITGLVEWCALFIIVS). Residues 188 to 205 (LRLANVNQNFKFINKYPG) lie on the Lumenal side of the membrane. The helical transmembrane segment at 206–226 (NLWSVSFINYLALFISMILPF) threads the bilayer. Residues 227 to 345 (RSIFIHHINS…VKRKRIFSLN (119 aa)) are Cytoplasmic-facing. Residues 346 to 366 (LFFFFSNYLVLQCFWAFLGSV) traverse the membrane as a helical segment. The ABC transmembrane type-1 1 domain maps to 354–662 (LVLQCFWAFL…LSDMLSFVVQ (309 aa)). The Lumenal segment spans residues 367–393 (LSFIPTVLLKRILEYVEDQSSAPSNLA). The chain crosses the membrane as a helical span at residues 394–414 (WFYVTVMFVGRILVAICQAQA). Residues 415 to 495 (LFFGRRVCIR…AFKVSEICGY (81 aa)) are Cytoplasmic-facing. Positions 445–468 (NKTKPSNEDPQEINDQKSINGDEE) are disordered. A helical transmembrane segment spans residues 496-516 (LHSFLEAFVMTVVALALLYRL). Over 517–519 (LGF) the chain is Lumenal. Residues 520–540 (AAIVGVLIIVAMLPLNYKLAK) traverse the membrane as a helical segment. At 541-602 (YIGDLQKKNL…LLLMRSIVWS (62 aa)) the chain is on the cytoplasmic side. A helical transmembrane segment spans residues 603 to 623 (ISSFLWFVTPTIVTAASFAYY). Residues 624–644 (IYVQGEVLTTPVAFTALSLFT) lie on the Lumenal side of the membrane. Residues 645 to 665 (LLRDPLDRLSDMLSFVVQSKV) form a helical membrane-spanning segment. The Cytoplasmic portion of the chain corresponds to 666–1053 (SLDRVQDFLN…SWWVRAWASH (388 aa)). The region spanning 694–935 (FAFENSTISW…GLFGEDELVK (242 aa)) is the ABC transporter 1 domain. 729–736 (GPTGSGKT) contributes to the ATP binding site. Phosphoserine occurs at positions 936, 940, and 955. An ABC transmembrane type-1 2 domain is found at 1026–1345 (VSFLASLFLI…LVRLYSEVEM (320 aa)). A helical transmembrane segment spans residues 1054–1074 (NVIAKIIPRAQRAIAFISKKA). Over 1075 to 1114 (SHLIDWRGSSQISMASAENQPSSGHSTMYYLVLYLIIGFA) the chain is Lumenal. Residues 1115–1135 (QALLGAGKTILNFVAGINASR) form a helical membrane-spanning segment. The Cytoplasmic portion of the chain corresponds to 1136-1178 (KIFNMILNKVLHSKIRFFDATPTGRIMNRFSKDIEAIDQELTP). A helical transmembrane segment spans residues 1179 to 1199 (YIQGAFYSLIECLSTVILITF). Position 1200 (Ile-1200) is a topological domain, lumenal. The helical transmembrane segment at 1201–1221 (TPQFLSVAIVVSILYYFVGYF) threads the bilayer. Over 1222–1292 (YMAGSRELKR…VANRWLAFRI (71 aa)) the chain is Cytoplasmic. Residues 1293 to 1313 (DMIGSLVIFGAGLFILFNINN) traverse the membrane as a helical segment. At 1314–1315 (LD) the chain is on the lumenal side. The helical transmembrane segment at 1316 to 1336 (SGMAGISLTYAISFTEGALWL) threads the bilayer. Topologically, residues 1337–1661 (VRLYSEVEMN…FVEKLNSKKD (325 aa)) are cytoplasmic. An ABC transporter 2 domain is found at 1381–1636 (IEVNDLSLRY…KQSAFYSMCE (256 aa)). Residue 1415 to 1422 (GRTGAGKS) coordinates ATP.

This sequence belongs to the ABC transporter superfamily. ABCC family. Conjugate transporter (TC 3.A.1.208) subfamily.

Its subcellular location is the vacuole membrane. Functionally, vacuolar class C ABC transporter which regulates the translocation of phosphatidylcholine to the vacuole lumen, the release of lumenal calcium stores, and acts as a negative regulator of vacuole fusion. Exhibits ATP-dependent bile acid transport. The polypeptide is ATP-dependent bile acid permease (YBT1) (Saccharomyces cerevisiae (strain ATCC 204508 / S288c) (Baker's yeast)).